Here is a 422-residue protein sequence, read N- to C-terminus: Glutamyl-tRNA reductase (422 aa).

Substrate is bound by residues 48 to 51, serine 100, 105 to 107, and glutamine 111; these read TCNR and EDQ. Cysteine 49 acts as the Nucleophile in catalysis. Residue 180–185 coordinates NADP(+); the sequence is GTGEMG.

Belongs to the glutamyl-tRNA reductase family. As to quaternary structure, homodimer.

The enzyme catalyses (S)-4-amino-5-oxopentanoate + tRNA(Glu) + NADP(+) = L-glutamyl-tRNA(Glu) + NADPH + H(+). It functions in the pathway porphyrin-containing compound metabolism; protoporphyrin-IX biosynthesis; 5-aminolevulinate from L-glutamyl-tRNA(Glu): step 1/2. Catalyzes the NADPH-dependent reduction of glutamyl-tRNA(Glu) to glutamate 1-semialdehyde (GSA). The chain is Glutamyl-tRNA reductase from Methanococcoides burtonii (strain DSM 6242 / NBRC 107633 / OCM 468 / ACE-M).